An 84-amino-acid chain; its full sequence is Small ribosomal subunit protein eS27-like (84 aa).

The segment covering 1–16 (MPLARDLLHPSLDEEK) has biased composition (basic and acidic residues). Positions 1–23 (MPLARDLLHPSLDEEKKKHKKKR) are disordered. The C4-type zinc finger occupies 38-60 (PGCYKITTVFSHAQTVVLCVGCS).

This sequence belongs to the eukaryotic ribosomal protein eS27 family. Requires Zn(2+) as cofactor.

The sequence is that of Small ribosomal subunit protein eS27-like (RPS27L) from Bos taurus (Bovine).